A 118-amino-acid chain; its full sequence is Large ribosomal subunit protein bL20 (118 aa).

The protein belongs to the bacterial ribosomal protein bL20 family.

Its function is as follows. Binds directly to 23S ribosomal RNA and is necessary for the in vitro assembly process of the 50S ribosomal subunit. It is not involved in the protein synthesizing functions of that subunit. The sequence is that of Large ribosomal subunit protein bL20 from Erwinia tasmaniensis (strain DSM 17950 / CFBP 7177 / CIP 109463 / NCPPB 4357 / Et1/99).